The chain runs to 458 residues: MKKLWGGRFTKTAAQWVDDFGASIHFDQQLVEEDIEGSIAHVTMLGECGILPKEDVETIKKGLTKLLEKAKRGELSFSVTYEDIHLNIEKMLIDEIGPVGGKLHTGRSRNDQVATDMHLYLRKRVIEIIELIRQLQRVLVEKAEQHIETLIPGYTHLQRAQPISFAHHLMAYVWMFERDRERFAESLKRMNKSPLGAGALAGTTFPIDRHLTARLLGFDGIYENSLDAVSDRDFIIEFLSNSSILMMHLSRFCEELILWSSQEFQFIEMDDTFATGSSIMPQKKNPDMAELIRGKTGRVYGHLMALLTVMKGLPLAYNKDMQEDKEGMFDTVQTVIGSLNIFAGMIETMTIRTDVMEKATKQDFSNATELADYLAKKGVPFREAHEIVGKLVLTCIERGVFLADLPLHVYQQASPLFEEDIYEALNPYTAVNRRTSAGGTGFTEVKKAIEKAKQMIEA.

This sequence belongs to the lyase 1 family. Argininosuccinate lyase subfamily.

The protein localises to the cytoplasm. The catalysed reaction is 2-(N(omega)-L-arginino)succinate = fumarate + L-arginine. It participates in amino-acid biosynthesis; L-arginine biosynthesis; L-arginine from L-ornithine and carbamoyl phosphate: step 3/3. This is Argininosuccinate lyase from Anoxybacillus flavithermus (strain DSM 21510 / WK1).